The primary structure comprises 180 residues: NADH-quinone oxidoreductase subunit I (180 aa).

2 4Fe-4S ferredoxin-type domains span residues 50–80 (LTRDPDGEERCVACNLCAVACPVGCISLQKA) and 90–119 (EFFRINFSRCIFCGMCEEACPTTAIQLTPD). [4Fe-4S] cluster-binding residues include Cys-60, Cys-63, Cys-66, Cys-70, Cys-99, Cys-102, Cys-105, and Cys-109.

Belongs to the complex I 23 kDa subunit family. NDH-1 is composed of 14 different subunits. Subunits NuoA, H, J, K, L, M, N constitute the membrane sector of the complex. It depends on [4Fe-4S] cluster as a cofactor.

Its subcellular location is the cell inner membrane. The enzyme catalyses a quinone + NADH + 5 H(+)(in) = a quinol + NAD(+) + 4 H(+)(out). Its function is as follows. NDH-1 shuttles electrons from NADH, via FMN and iron-sulfur (Fe-S) centers, to quinones in the respiratory chain. The immediate electron acceptor for the enzyme in this species is believed to be ubiquinone. Couples the redox reaction to proton translocation (for every two electrons transferred, four hydrogen ions are translocated across the cytoplasmic membrane), and thus conserves the redox energy in a proton gradient. This chain is NADH-quinone oxidoreductase subunit I, found in Acinetobacter baumannii (strain ACICU).